The chain runs to 679 residues: Methionine--tRNA ligase (679 aa).

Positions 14–24 (PYANGSIHLGH) match the 'HIGH' region motif. Zn(2+) is bound by residues C145, C148, C158, and C161. The 'KMSKS' region signature appears at 331–335 (KMSKS). Position 334 (K334) interacts with ATP. Residues 577-679 (AFAAVDLRIA…SGAKPGQRVK (103 aa)) enclose the tRNA-binding domain.

The protein belongs to the class-I aminoacyl-tRNA synthetase family. MetG type 1 subfamily. As to quaternary structure, homodimer. Zn(2+) is required as a cofactor.

Its subcellular location is the cytoplasm. The catalysed reaction is tRNA(Met) + L-methionine + ATP = L-methionyl-tRNA(Met) + AMP + diphosphate. Functionally, is required not only for elongation of protein synthesis but also for the initiation of all mRNA translation through initiator tRNA(fMet) aminoacylation. This is Methionine--tRNA ligase from Pseudomonas paraeruginosa (strain DSM 24068 / PA7) (Pseudomonas aeruginosa (strain PA7)).